Here is an 83-residue protein sequence, read N- to C-terminus: Turripeptide Lol11.2 (83 aa).

Residues 1–27 (MARLMMTVGCLIFIVVLLDMMVPVSNT) form the signal peptide.

It belongs to the conopeptide I2-like superfamily. Contains 4 disulfide bonds. In terms of tissue distribution, expressed by the venom duct.

The protein localises to the secreted. Acts as a neurotoxin by inhibiting voltage-gated potassium channels (Kv). The protein is Turripeptide Lol11.2 of Iotyrris olangoensis (Sea snail).